Consider the following 252-residue polypeptide: L-aspartate dehydrogenase (252 aa).

The NAD(+) site is built by Ala119 and Asn175. The active site involves His203.

It belongs to the L-aspartate dehydrogenase family.

It catalyses the reaction L-aspartate + NADP(+) + H2O = oxaloacetate + NH4(+) + NADPH + H(+). The catalysed reaction is L-aspartate + NAD(+) + H2O = oxaloacetate + NH4(+) + NADH + H(+). It functions in the pathway cofactor biosynthesis; NAD(+) biosynthesis; iminoaspartate from L-aspartate (dehydrogenase route): step 1/1. Specifically catalyzes the NAD or NADP-dependent dehydrogenation of L-aspartate to iminoaspartate. The chain is L-aspartate dehydrogenase from Methanospirillum hungatei JF-1 (strain ATCC 27890 / DSM 864 / NBRC 100397 / JF-1).